Here is a 292-residue protein sequence, read N- to C-terminus: Elongation factor Ts (292 aa).

The involved in Mg(2+) ion dislocation from EF-Tu stretch occupies residues 80–83 (TDFV).

The protein belongs to the EF-Ts family.

It is found in the cytoplasm. In terms of biological role, associates with the EF-Tu.GDP complex and induces the exchange of GDP to GTP. It remains bound to the aminoacyl-tRNA.EF-Tu.GTP complex up to the GTP hydrolysis stage on the ribosome. This Ralstonia nicotianae (strain ATCC BAA-1114 / GMI1000) (Ralstonia solanacearum) protein is Elongation factor Ts.